Consider the following 749-residue polypeptide: 1,4-alpha-glucan branching enzyme GlgB (749 aa).

The active-site Nucleophile is aspartate 427. Residue glutamate 480 is the Proton donor of the active site.

It belongs to the glycosyl hydrolase 13 family. GlgB subfamily. Monomer.

It carries out the reaction Transfers a segment of a (1-&gt;4)-alpha-D-glucan chain to a primary hydroxy group in a similar glucan chain.. It participates in glycan biosynthesis; glycogen biosynthesis. Its function is as follows. Catalyzes the formation of the alpha-1,6-glucosidic linkages in glycogen by scission of a 1,4-alpha-linked oligosaccharide from growing alpha-1,4-glucan chains and the subsequent attachment of the oligosaccharide to the alpha-1,6 position. The chain is 1,4-alpha-glucan branching enzyme GlgB from Thermobifida fusca (strain YX).